Reading from the N-terminus, the 231-residue chain is 5'-methylthioadenosine/S-adenosylhomocysteine nucleosidase (231 aa).

Glu-12 functions as the Proton acceptor in the catalytic mechanism. Substrate-binding positions include Gly-78, Met-153, and Met-174–Glu-175. The active-site Proton donor is Asp-198.

The protein belongs to the PNP/UDP phosphorylase family. MtnN subfamily.

The enzyme catalyses S-adenosyl-L-homocysteine + H2O = S-(5-deoxy-D-ribos-5-yl)-L-homocysteine + adenine. The catalysed reaction is S-methyl-5'-thioadenosine + H2O = 5-(methylsulfanyl)-D-ribose + adenine. It catalyses the reaction 5'-deoxyadenosine + H2O = 5-deoxy-D-ribose + adenine. It participates in amino-acid biosynthesis; L-methionine biosynthesis via salvage pathway; S-methyl-5-thio-alpha-D-ribose 1-phosphate from S-methyl-5'-thioadenosine (hydrolase route): step 1/2. Functionally, catalyzes the irreversible cleavage of the glycosidic bond in both 5'-methylthioadenosine (MTA) and S-adenosylhomocysteine (SAH/AdoHcy) to adenine and the corresponding thioribose, 5'-methylthioribose and S-ribosylhomocysteine, respectively. Also cleaves 5'-deoxyadenosine, a toxic by-product of radical S-adenosylmethionine (SAM) enzymes, into 5-deoxyribose and adenine. This chain is 5'-methylthioadenosine/S-adenosylhomocysteine nucleosidase, found in Psychromonas ingrahamii (strain DSM 17664 / CCUG 51855 / 37).